Here is a 77-residue protein sequence, read N- to C-terminus: Exodeoxyribonuclease 7 small subunit (77 aa).

It belongs to the XseB family. In terms of assembly, heterooligomer composed of large and small subunits.

It is found in the cytoplasm. The enzyme catalyses Exonucleolytic cleavage in either 5'- to 3'- or 3'- to 5'-direction to yield nucleoside 5'-phosphates.. Functionally, bidirectionally degrades single-stranded DNA into large acid-insoluble oligonucleotides, which are then degraded further into small acid-soluble oligonucleotides. In Lysinibacillus sphaericus (strain C3-41), this protein is Exodeoxyribonuclease 7 small subunit.